The primary structure comprises 151 residues: Ribonuclease H (151 aa).

The RNase H type-1 domain occupies 1–141 (MKNVIIYTDG…ADALANRGID (141 aa)). Residues Asp-9, Glu-47, Asp-69, and Asp-133 each contribute to the Mg(2+) site.

This sequence belongs to the RNase H family. Monomer. Requires Mg(2+) as cofactor.

It is found in the cytoplasm. It catalyses the reaction Endonucleolytic cleavage to 5'-phosphomonoester.. Endonuclease that specifically degrades the RNA of RNA-DNA hybrids. The chain is Ribonuclease H from Alcanivorax borkumensis (strain ATCC 700651 / DSM 11573 / NCIMB 13689 / SK2).